A 522-amino-acid chain; its full sequence is 56 kDa type-specific antigen (522 aa).

Positions 1–22 (MKKIMLIASAMSALSLPFSASA) are cleaved as a signal peptide. Residues 67 to 87 (LTTMLPFGGTLAAGMTIAPGF) form a helical membrane-spanning segment. The segment at 385–417 (AQEEGDDQSQVSCNDKKQQAVAEDSKAGSSKEG) is disordered. Over residues 398–417 (NDKKQQAVAEDSKAGSSKEG) the composition is skewed to basic and acidic residues. A helical membrane pass occupies residues 470-490 (IGVVASGVLGVAINVADGVCV).

The protein resides in the cell membrane. May be an adherent factor for rickettsial adsorption to the host-cell surface and a determinant of virulence of individual rickettsial strain. It is the major outer membrane protein. This Orientia tsutsugamushi (Rickettsia tsutsugamushi) protein is 56 kDa type-specific antigen.